We begin with the raw amino-acid sequence, 347 residues long: Probable E3 ubiquitin-protein ligase DTX3 (347 aa).

The segment at 111–157 is disordered; the sequence is GGEHPELHRPGPPPLRAAPLLPPGARGLPPPPPPLPPPLPPRLREDA. Positions 120 to 151 are enriched in pro residues; that stretch reads PGPPPLRAAPLLPPGARGLPPPPPPLPPPLPP. The RING-type zinc finger occupies 164–205; it reads CPICLGEIQNAKTLEKCRHSFCEGCITRALQVKKACPMCGRF.

It belongs to the Deltex family. Homodimer. May form a heterodimer with other members of the Deltex family. Interacts with NOTCH1. In terms of tissue distribution, strongly expressed in testis and brain. Weakly expressed in kidney.

It is found in the cytoplasm. It carries out the reaction S-ubiquitinyl-[E2 ubiquitin-conjugating enzyme]-L-cysteine + [acceptor protein]-L-lysine = [E2 ubiquitin-conjugating enzyme]-L-cysteine + N(6)-ubiquitinyl-[acceptor protein]-L-lysine.. It participates in protein modification; protein ubiquitination. In terms of biological role, regulator of Notch signaling, a signaling pathway involved in cell-cell communications that regulates a broad spectrum of cell-fate determinations. Probably acts both as a positive and negative regulator of Notch, depending on the developmental and cell context. Functions as a ubiquitin ligase protein in vitro, suggesting that it may regulate the Notch pathway via some ubiquitin ligase activity. The chain is Probable E3 ubiquitin-protein ligase DTX3 (Dtx3) from Mus musculus (Mouse).